Reading from the N-terminus, the 544-residue chain is NADP-dependent malic enzyme (544 aa).

The disordered stretch occupies residues 1-22 (MQNKPSFILRNPSANKGTGFNN). The span at 12 to 21 (PSANKGTGFN) shows a compositional bias: polar residues. Residue Tyr-92 is the Proton donor of the active site. Arg-145 serves as a coordination point for NAD(+). Residue Lys-163 is the Proton acceptor of the active site. 3 residues coordinate a divalent metal cation: Glu-234, Asp-235, and Asp-258. Asp-258 contacts NAD(+). 287-303 (VFLGAGSAGIGVADCIM) serves as a coordination point for NADP(+). Asn-400 lines the NAD(+) pocket.

This sequence belongs to the malic enzymes family. In terms of assembly, homotetramer. It depends on Mg(2+) as a cofactor. Requires Mn(2+) as cofactor. As to expression, expressed in the fruiting body.

It localises to the cytoplasm. The enzyme catalyses (S)-malate + NADP(+) = pyruvate + CO2 + NADPH. It carries out the reaction oxaloacetate + H(+) = pyruvate + CO2. The chain is NADP-dependent malic enzyme (malA) from Dictyostelium discoideum (Social amoeba).